Here is a 263-residue protein sequence, read N- to C-terminus: 4-hydroxy-tetrahydrodipicolinate reductase (263 aa).

NAD(+) contacts are provided by residues 7–12 (GASGRM) and Asp33. Arg34 lines the NADP(+) pocket. Residues 96 to 98 (GTT) and 120 to 123 (APNM) each bind NAD(+). The active-site Proton donor/acceptor is the His153. Residue His154 participates in (S)-2,3,4,5-tetrahydrodipicolinate binding. Lys157 serves as the catalytic Proton donor. (S)-2,3,4,5-tetrahydrodipicolinate is bound at residue 163–164 (GT).

This sequence belongs to the DapB family.

It localises to the cytoplasm. It carries out the reaction (S)-2,3,4,5-tetrahydrodipicolinate + NAD(+) + H2O = (2S,4S)-4-hydroxy-2,3,4,5-tetrahydrodipicolinate + NADH + H(+). The enzyme catalyses (S)-2,3,4,5-tetrahydrodipicolinate + NADP(+) + H2O = (2S,4S)-4-hydroxy-2,3,4,5-tetrahydrodipicolinate + NADPH + H(+). It participates in amino-acid biosynthesis; L-lysine biosynthesis via DAP pathway; (S)-tetrahydrodipicolinate from L-aspartate: step 4/4. Catalyzes the conversion of 4-hydroxy-tetrahydrodipicolinate (HTPA) to tetrahydrodipicolinate. The chain is 4-hydroxy-tetrahydrodipicolinate reductase from Ralstonia pickettii (strain 12J).